We begin with the raw amino-acid sequence, 294 residues long: tRNA pseudouridine synthase A (294 aa).

Asp-64 serves as the catalytic Nucleophile. Tyr-122 contacts substrate.

The protein belongs to the tRNA pseudouridine synthase TruA family. As to quaternary structure, homodimer.

It catalyses the reaction uridine(38/39/40) in tRNA = pseudouridine(38/39/40) in tRNA. Its function is as follows. Formation of pseudouridine at positions 38, 39 and 40 in the anticodon stem and loop of transfer RNAs. The sequence is that of tRNA pseudouridine synthase A from Synechococcus sp. (strain ATCC 27144 / PCC 6301 / SAUG 1402/1) (Anacystis nidulans).